The chain runs to 931 residues: G patch domain-containing protein 1 (931 aa).

Disordered regions lie at residues 1–41 (MAAR…TVRD), 73–92 (PSTFVSSRQNRADKSVLGPE), and 169–209 (QGVG…EDDD). Residue alanine 2 is modified to N-acetylalanine. 2 positions are modified to phosphoserine: serine 6 and serine 8. In terms of domain architecture, G-patch spans 152–198 (KLSVGFELLRKMGWKEGQGVGPRVKRRPRRQKPDPGVKIYGCALPPG). Lysine 312 participates in a covalent cross-link: Glycyl lysine isopeptide (Lys-Gly) (interchain with G-Cter in SUMO2). Residues serine 357 and serine 477 each carry the phosphoserine modification. Disordered stretches follow at residues 568 to 595 (RFTHAKEEDDSDQVEVPRDQENDVGDKQ) and 659 to 931 (LPTT…LRRQ). The span at 582–593 (EVPRDQENDVGD) shows a compositional bias: basic and acidic residues. Residues 659–668 (LPTTQASSEK) show a composition bias toward polar residues. Residues 669-695 (VSQHRGPDKSRKPSRWDTSKHEKKEDS) show a composition bias toward basic and acidic residues. Serine 715 is modified (phosphoserine). Acidic residues predominate over residues 769 to 780 (SEDEQGDSEDDQ). A compositionally biased stretch (polar residues) spans 786–802 (ANFQSSQDTDLGETSSV). A compositionally biased stretch (basic residues) spans 852-888 (EKHKKNKDKHKAKKEHRRKKEKKKKHRKHKHKGKQKN). Residues 896-905 (SSESSDSSDS) show a composition bias toward low complexity. Residues 922 to 931 (RLKSLPLRRQ) show a composition bias toward basic residues.

Belongs to the GPATCH1 family.

The chain is G patch domain-containing protein 1 (GPATCH1) from Homo sapiens (Human).